The sequence spans 119 residues: Large ribosomal subunit protein uL18 (119 aa).

It belongs to the universal ribosomal protein uL18 family. As to quaternary structure, part of the 50S ribosomal subunit; part of the 5S rRNA/L5/L18/L25 subcomplex. Contacts the 5S and 23S rRNAs.

This is one of the proteins that bind and probably mediate the attachment of the 5S RNA into the large ribosomal subunit, where it forms part of the central protuberance. The protein is Large ribosomal subunit protein uL18 of Clostridium tetani (strain Massachusetts / E88).